The sequence spans 440 residues: Ferreportin (440 aa).

Over 1-8 (MKVQSLLR) the chain is Cytoplasmic. Residues 9 to 38 (IETQLLLGRLLTRSGDQAWDFVVPFALLVI) traverse the membrane as a helical segment. Position 24 (Asp-24) interacts with Ca(2+). Over 39–42 (FPGK) the chain is Extracellular. Residues 43–69 (LQVAAFYYLIVKIGTFLLTPSSGKWID) form a helical membrane-spanning segment. Over 70 to 72 (THP) the chain is Cytoplasmic. The chain crosses the membrane as a helical span at residues 73 to 103 (RIQVVKWGVWLQFFAILAGMVFFGMLDGLVR). Position 84 (Gln-84) interacts with Ca(2+). The Extracellular portion of the chain corresponds to 104–109 (AGGRES). The helical transmembrane segment at 110–145 (WLLSVLFIALALSGVMASLGSQITDISVGNDLAPSL) threads the bilayer. At 146-147 (VA) the chain is on the cytoplasmic side. A helical membrane pass occupies residues 148–176 (PEKLTHFNSWLRRIDLATEVGAPILAGAL). The Extracellular segment spans residues 177–186 (FAFHPEQLPL). The chain crosses the membrane as a helical span at residues 187–213 (AGLFLIGLWNLVSFVPEYFLLRNVIQR). Positions 196 and 203 each coordinate Ca(2+). Over 214 to 242 (SGLKIKVLTEAQSWKDTFHINLRGSFSDP) the chain is Cytoplasmic. Residues 243 to 271 (IFWLILSYALLWLSVLSPHGVLLAAYLKD) form a helical membrane-spanning segment. Residues 272–276 (EMRLP) lie on the Extracellular side of the membrane. Residues 277–304 (ETEIGLFRGLGAVFGLISTVSFPYLVRR) traverse the membrane as a helical segment. At 305-306 (LG) the chain is on the cytoplasmic side. Residues 307-329 (LISSSRWHLGFQGVTLGIAVTAF) form a helical membrane-spanning segment. Residues 330–335 (AMGSTA) lie on the Extracellular side of the membrane. Residues 336–365 (SVYVFLGCILLSRVGLYGFSNGEFELRQRL) traverse the membrane as a helical segment. The Cytoplasmic segment spans residues 366–370 (IPEGR). Residues 371 to 395 (RGELNSLSSLTTTSATLILFSAGSL) form a helical membrane-spanning segment. Residues 396-398 (LPQ) lie on the Extracellular side of the membrane. A helical transmembrane segment spans residues 399–424 (TEDFKYLVYVSLAAVLLANVVFIKWS). The Cytoplasmic portion of the chain corresponds to 425-440 (SRQGVVTSGAAEPVES).

This sequence belongs to the ferroportin (FP) (TC 2.A.100) family. Ca(2+) is required as a cofactor.

It localises to the cell membrane. Its function is as follows. Iron transpoter that exports Fe(2+) from the cell. Also binds to Co(2+) and Ni(2+). May act as a multivalent divalent metal transporter. The transporter is composed of 12 transmembrane (TM) helices organized into N-terminal (TM1-6) and C-terminal (TM7-12) domains. The substrate-binding site is formed at the interface of the two domains and is alternately accessible from either side of the membrane. The transport cycle is viewed as a series of ligand-induced conformational changes that include open outward and open inward states. This Bdellovibrio bacteriovorus (strain ATCC 15356 / DSM 50701 / NCIMB 9529 / HD100) protein is Ferreportin (slc39).